We begin with the raw amino-acid sequence, 521 residues long: MQSHSKKRVCYYYDSDIGNYYYGQGHPMKPHRIRMTHNLLLNYGLYRKMEIYRPHKATADEMTKFHSDEYVRFLRSIRPDNMSEYNKQMQRFNVGEDCPVFDGLYEFCQLSAGGSVAAAVKLNKQASEICINWGGGLHHAKKSEASGFCYVNDIVLGILELLKYHQRVLYIDIDVHHGDGVEEAFYTTDRVMTVSFHKYGEYFPGTGDLRDIGAGKGKYYAVNIPLRDGMDDDAYESIFVPIISKVMETFQPAAVVLQCGADSLTGDRLGCFNLTVKGHGKCVEFVKKYNLPFLMVGGGGYTIRNVSRCWTYETSVALAVEIANELPYNDYFEYFGPDFKLHISPSNMTNQNTSEYLEKIKNRLFENLRMLPHAPGVQIQAIPEDAINDESDDEDKVDKDDRLPQSDKDKRIVPENEYSDSEDEGEGGRRDNRSYKGQRKRPRLDKDTNSNKASSETSSEIKDEKEKGDGADGEESTASNTNSNNNSNNKSDNDAGATANAGSGSGSGSGAGAKGAKENNI.

The segment at 7-319 (KRVCYYYDSD…WTYETSVALA (313 aa)) is histone deacetylase. Residue H139 is part of the active site. Residues 376-521 (GVQIQAIPED…GAKGAKENNI (146 aa)) are disordered. Over residues 386–395 (AINDESDDED) the composition is skewed to acidic residues. S391 is modified (phosphoserine). The segment covering 396 to 414 (KVDKDDRLPQSDKDKRIVP) has biased composition (basic and acidic residues). Phosphoserine occurs at positions 419, 421, and 455. T457 carries the post-translational modification Phosphothreonine. Basic and acidic residues predominate over residues 459–470 (SEIKDEKEKGDG). Low complexity predominate over residues 476–502 (STASNTNSNNNSNNKSDNDAGATANAG). Over residues 503–513 (SGSGSGSGAGA) the composition is skewed to gly residues.

It belongs to the histone deacetylase family. HD type 1 subfamily. Component of a form of the Esc/E(z) complex present specifically during early embryogenesis which is composed of Caf1-55, esc, E(z), Su(z)12, Pcl and HDAC1. The Esc/E(z) complex may also associate with Pcl and HDAC1 during early embryogenesis. This complex is distinct from the PRC1 complex, which contains many other PcG proteins like Pc, Ph, Psc, Su(z)2. The 2 complexes however cooperate and interact together during the first 3 hours of development to establish PcG silencing. Interacts with the histone methyltransferase Su(var)3-9. Component of a complex that contains at least HDAC1, CoRest and Su(var)3-3/Hdm. Component of the DREAM complex at least composed of Myb, Caf1-55, mip40, mip120, mip130, E2f2, Dp, Rbf, Rbf2, lin-52, HDAC1 and l(3)mbt. Interacts with the chromatin-remodeler Mi-2. Interacts with Rrp6.

Its subcellular location is the nucleus. It carries out the reaction N(6)-acetyl-L-lysyl-[histone] + H2O = L-lysyl-[histone] + acetate. Functionally, catalyzes the deacetylation of lysine residues on the N-terminal part of the core histones (H2A, H2B, H3 and H4). Histone deacetylation may constitute a tag for epigenetic repression and plays an important role in transcriptional regulation, cell cycle progression and developmental events. For instance, deacetylation of histone H3 may be a prerequisite for the subsequent recruitment of the histone methyltransferase Su(var)3-9 to histones. Involved in position-effect variegation (PEV). In the larval brain, part of a regulatory network including the transcriptional repressors klu, dpn and E(spl)mgamma-HLH which is required for type II neuroblast self-renewal and for maintaining erm in an inactive state in intermediate neural progenitors (INP). This Drosophila melanogaster (Fruit fly) protein is Histone deacetylase HDAC1.